Consider the following 287-residue polypeptide: Putative DNA-3-methyladenine glycosylase YfjP (287 aa).

Asp-242 functions as the Proton acceptor in the catalytic mechanism.

This sequence belongs to the alkylbase DNA glycosidase AlkA family.

It catalyses the reaction Hydrolysis of alkylated DNA, releasing 3-methyladenine, 3-methylguanine, 7-methylguanine and 7-methyladenine.. Its function is as follows. Hydrolysis of the deoxyribose N-glycosidic bond to excise 3-methyladenine, 3-methylguanine, 7-methylguanine, O2-methylthymine, and O2-methylcytosine from the damaged DNA polymer formed by alkylation lesions. The protein is Putative DNA-3-methyladenine glycosylase YfjP (yfjP) of Bacillus subtilis (strain 168).